A 134-amino-acid chain; its full sequence is STAG3-like protein 3 (134 aa).

Positions 10 to 95 (PKVTCRDVLP…GCFKDWMVSM (86 aa)) constitute an SCD domain.

This sequence belongs to the SCC3 family.

The protein resides in the nucleus. This chain is STAG3-like protein 3 (STAG3L3), found in Homo sapiens (Human).